We begin with the raw amino-acid sequence, 204 residues long: High frequency lysogenization protein HflD homolog (204 aa).

Belongs to the HflD family.

The protein localises to the cytoplasm. It localises to the cell inner membrane. This is High frequency lysogenization protein HflD homolog from Xanthomonas axonopodis pv. citri (strain 306).